The following is a 499-amino-acid chain: Rhodopsin, GQ-coupled (499 aa).

Residues 1–50 (MADNKSTLPGLPDINGTLNRSMTPNTGWEGPYDMSVHLHWTQFPPVTEEW) are Extracellular-facing. Residues Asn-4, Asn-15, and Asn-19 are each glycosylated (N-linked (GlcNAc...) asparagine). The chain crosses the membrane as a helical span at residues 51–75 (HYIIGVYITIVGLLGIMGNTTVVYI). The Cytoplasmic segment spans residues 76–87 (FSNTKSLRSPSN). A helical transmembrane segment spans residues 88 to 114 (LFVVNLAVSDLIFSAVNGFPLLTVSSF). Over 115–128 (HQKWIFGSLFCQLY) the chain is Extracellular. A disulfide bridge links Cys-125 with Cys-203. The chain crosses the membrane as a helical span at residues 129–148 (GFVGGVFGLMSINTLTAISI). At 149-168 (DRYVVITKPLQASQTMTRRK) the chain is on the cytoplasmic side. The chain crosses the membrane as a helical span at residues 169–192 (VHLMIVIVWVLSILLSIPPFFGWG). The Extracellular portion of the chain corresponds to 193–216 (AYIPEGFQTSCTFDYLTKTARTRT). A helical transmembrane segment spans residues 217–244 (YIVVLYLFGFLIPLIIIGVCYVLIIRGV). Residues 245–278 (RRHDQKMLTITRSMKTEDARANNKRARSELRISK) lie on the Cytoplasmic side of the membrane. Residues 279 to 302 (IAMTVTCLFIISWSPYAIIALIAQ) traverse the membrane as a helical segment. Over 303-310 (FGPAHWIT) the chain is Extracellular. Residues 311 to 335 (PLVSELPMMLAKSSSMHNPVVYALS) form a helical membrane-spanning segment. Lys-322 carries the post-translational modification N6-(retinylidene)lysine. The Cytoplasmic portion of the chain corresponds to 336–499 (HPKFRKALYQ…QRVNGLTFNS (164 aa)). S-palmitoyl cysteine attachment occurs at residues Cys-353 and Cys-354.

This sequence belongs to the G-protein coupled receptor 1 family. Opsin subfamily. Phosphorylated on some or all of the serine and threonine residues present in the C-terminal region. Retina. Expressed in the depolarizing cell layer of the photoreceptor cells distant from the lens.

The protein localises to the membrane. Visual pigments such as rhodopsin and porphyropsin are light-absorbing molecules that mediate vision. Rhodopsin consists of an apoprotein, opsin, covalently linked to 11-cis-retinal. This receptor is coupled to the activation of phospholipase C. Porphyropsin consists of opsin covalently linked to 11-cis 3,4-didehydroretinal. In Mizuhopecten yessoensis (Japanese scallop), this protein is Rhodopsin, GQ-coupled (SCOP1).